A 394-amino-acid chain; its full sequence is Probable peptidoglycan glycosyltransferase FtsW (394 aa).

Topologically, residues 1 to 27 (MEFLQNIKKNYDEWTRITPQGLLYDRA) are cytoplasmic. The chain crosses the membrane as a helical span at residues 28 to 48 (LFWLFVILLLIGLVAVTSASI). At 49–66 (PYSSRLFNDPFYFAKRDA) the chain is on the periplasmic side. The helical transmembrane segment at 67–87 (IYVLLSLLTCYISLQISSSQW) threads the bilayer. Residues 88–93 (EKWHAK) are Cytoplasmic-facing. Residues 94–114 (IFLFSVILLLLVPFIGTSVNG) traverse the membrane as a helical segment. The Periplasmic portion of the chain corresponds to 115-120 (AKRWIS). A helical membrane pass occupies residues 121 to 141 (LGILNFQPAEFAKLALTCFLA). At 142-155 (SYFTRRYDEVRSRH) the chain is on the cytoplasmic side. The next 2 membrane-spanning stretches (helical) occupy residues 156–176 (VSIFKPFIVMLVLGCFLLLQP) and 177–197 (DLGSTVVLFIIMSGMLFIVGA). Lys198 is a topological domain (cytoplasmic). The helical transmembrane segment at 199–219 (ILQFVGLIALGGILFVWLVLT) threads the bilayer. At 220–277 (ASYRLKRFIGFLEPFKEPYGTGFQLTNSLIAFGRGEITGEGLGNSIQKLDYLPEAHTD) the chain is on the periplasmic side. Residues 278-298 (FIMAIIGEEFGFIGILIVILL) form a helical membrane-spanning segment. Residues 299–322 (LGLLIFRAMKIGRESLMLEQRFRG) are Cytoplasmic-facing. A helical transmembrane segment spans residues 323 to 343 (FFALGIGFWIFFQGFVNLGMA). At 344–353 (LGMLPTKGLT) the chain is on the periplasmic side. The helical transmembrane segment at 354 to 374 (FPLVSYGGSSIIIMSATIGIL) threads the bilayer. At 375–394 (LRIDHENRLFRIGQARLRDD) the chain is on the cytoplasmic side.

The protein belongs to the SEDS family. FtsW subfamily.

The protein localises to the cell inner membrane. The catalysed reaction is [GlcNAc-(1-&gt;4)-Mur2Ac(oyl-L-Ala-gamma-D-Glu-L-Lys-D-Ala-D-Ala)](n)-di-trans,octa-cis-undecaprenyl diphosphate + beta-D-GlcNAc-(1-&gt;4)-Mur2Ac(oyl-L-Ala-gamma-D-Glu-L-Lys-D-Ala-D-Ala)-di-trans,octa-cis-undecaprenyl diphosphate = [GlcNAc-(1-&gt;4)-Mur2Ac(oyl-L-Ala-gamma-D-Glu-L-Lys-D-Ala-D-Ala)](n+1)-di-trans,octa-cis-undecaprenyl diphosphate + di-trans,octa-cis-undecaprenyl diphosphate + H(+). It participates in cell wall biogenesis; peptidoglycan biosynthesis. Its function is as follows. Peptidoglycan polymerase that is essential for cell division. This is Probable peptidoglycan glycosyltransferase FtsW from Haemophilus influenzae (strain ATCC 51907 / DSM 11121 / KW20 / Rd).